Reading from the N-terminus, the 511-residue chain is Cobyric acid synthase (511 aa).

One can recognise a GATase cobBQ-type domain in the interval 251 to 443 (LLDIAIICLP…IHGIFDNDIF (193 aa)). The Nucleophile role is filled by cysteine 332. Histidine 435 is an active-site residue.

This sequence belongs to the CobB/CobQ family. CobQ subfamily.

It participates in cofactor biosynthesis; adenosylcobalamin biosynthesis. In terms of biological role, catalyzes amidations at positions B, D, E, and G on adenosylcobyrinic A,C-diamide. NH(2) groups are provided by glutamine, and one molecule of ATP is hydrogenolyzed for each amidation. The protein is Cobyric acid synthase of Listeria welshimeri serovar 6b (strain ATCC 35897 / DSM 20650 / CCUG 15529 / CIP 8149 / NCTC 11857 / SLCC 5334 / V8).